A 250-amino-acid polypeptide reads, in one-letter code: MEPSSQPQPAIGVVAGGSQVYPAYRPAATVPTAPAVIPAGSQPAPSFPANPDQLSAQHQLVYQQAQQFHQQLQQQQQRQLQQFWAERLVDIEQTTDFKNHSLPLARIKKIMKADEDVRMISAEAPVIFAKACEIFILELTLRSWMHTEENKRRTLQKNDIAAAITRTDMYDFLVDIVPRDDLKEEGVGLPRAGLPPLGVPADSYPYGYYVPQQQVPGAGIAYGGQQGHPGYLWQDPQEQQEEPPAEQQSD.

Positions 219-250 (GIAYGGQQGHPGYLWQDPQEQQEEPPAEQQSD) are disordered. The span at 238-250 (EQQEEPPAEQQSD) shows a compositional bias: acidic residues.

This sequence belongs to the NFYC/HAP5 subunit family. Heterotrimeric transcription factor composed of three components, NF-YA, NF-YB and NF-YC. NF-YB and NF-YC must interact and dimerize for NF-YA association and DNA binding. Interacts with NFYB2. Interacts with NFYB8, NFYB10 and HD5/NFYB11.

The protein localises to the nucleus. It localises to the cytoplasm. In terms of biological role, probable transcription factor involved in the regulation of flowering time under long day (LD) conditions. Functions as a repressor of flowering, independently of HD1 and GHD7. Controls flowering time by negatively regulating the expression of EHD1 and HD3A. Component of the NF-Y/HAP transcription factor complex. The protein is Nuclear transcription factor Y subunit C-4 of Oryza sativa subsp. japonica (Rice).